We begin with the raw amino-acid sequence, 185 residues long: Ribosome maturation factor RimM (185 aa).

The 76-residue stretch at 96–171 (EDEFYHSDLL…VITIDPPEDV (76 aa)) folds into the PRC barrel domain. The disordered stretch occupies residues 165–185 (IDPPEDVGSKAEEEGGGAPDD).

It belongs to the RimM family. Binds ribosomal protein uS19.

Its subcellular location is the cytoplasm. In terms of biological role, an accessory protein needed during the final step in the assembly of 30S ribosomal subunit, possibly for assembly of the head region. Essential for efficient processing of 16S rRNA. May be needed both before and after RbfA during the maturation of 16S rRNA. It has affinity for free ribosomal 30S subunits but not for 70S ribosomes. The protein is Ribosome maturation factor RimM of Maricaulis maris (strain MCS10) (Caulobacter maris).